Here is a 126-residue protein sequence, read N- to C-terminus: uncharacterized protein (126 aa).

This is an uncharacterized protein from Rickettsia prowazekii (strain Madrid E).